Reading from the N-terminus, the 256-residue chain is uncharacterized protein (256 aa).

Residues 201-214 are compositionally biased toward basic and acidic residues; it reads ACKEGVDSSCKEEG. Positions 201–231 are disordered; that stretch reads ACKEGVDSSCKEEGGGCEEEGSGSEEDSDDS. A compositionally biased stretch (acidic residues) spans 215–231; it reads GGCEEEGSGSEEDSDDS.

It is found in the mitochondrion. This is an uncharacterized protein from Zea mays (Maize).